The chain runs to 386 residues: S-adenosylmethionine synthase (386 aa).

Histidine 16 serves as a coordination point for ATP. Aspartate 18 contacts Mg(2+). A K(+)-binding site is contributed by glutamate 44. L-methionine contacts are provided by glutamate 57 and glutamine 100. A flexible loop region spans residues 100 to 110; the sequence is QSGDIAMGVDE. ATP-binding positions include 165–167, aspartate 240, 246–247, alanine 263, and lysine 267; these read DAK and RK. An L-methionine-binding site is contributed by aspartate 240. Residue lysine 271 coordinates L-methionine.

This sequence belongs to the AdoMet synthase family. As to quaternary structure, homotetramer; dimer of dimers. Mg(2+) is required as a cofactor. It depends on K(+) as a cofactor.

Its subcellular location is the cytoplasm. It catalyses the reaction L-methionine + ATP + H2O = S-adenosyl-L-methionine + phosphate + diphosphate. The protein operates within amino-acid biosynthesis; S-adenosyl-L-methionine biosynthesis; S-adenosyl-L-methionine from L-methionine: step 1/1. Functionally, catalyzes the formation of S-adenosylmethionine (AdoMet) from methionine and ATP. The overall synthetic reaction is composed of two sequential steps, AdoMet formation and the subsequent tripolyphosphate hydrolysis which occurs prior to release of AdoMet from the enzyme. This Hahella chejuensis (strain KCTC 2396) protein is S-adenosylmethionine synthase.